The sequence spans 95 residues: Small ribosomal subunit protein uS19 (95 aa).

The protein belongs to the universal ribosomal protein uS19 family.

In terms of biological role, protein S19 forms a complex with S13 that binds strongly to the 16S ribosomal RNA. This Chloroflexus aurantiacus (strain ATCC 29366 / DSM 635 / J-10-fl) protein is Small ribosomal subunit protein uS19.